Here is a 427-residue protein sequence, read N- to C-terminus: 3-phosphoshikimate 1-carboxyvinyltransferase (427 aa).

3 residues coordinate 3-phosphoshikimate: Lys-20, Ser-21, and Arg-25. Lys-20 contacts phosphoenolpyruvate. 2 residues coordinate phosphoenolpyruvate: Gly-92 and Arg-120. Positions 166, 168, 312, and 339 each coordinate 3-phosphoshikimate. A phosphoenolpyruvate-binding site is contributed by Gln-168. The Proton acceptor role is filled by Asp-312. Phosphoenolpyruvate-binding residues include Arg-343 and Arg-385.

The protein belongs to the EPSP synthase family. Monomer.

It localises to the cytoplasm. It carries out the reaction 3-phosphoshikimate + phosphoenolpyruvate = 5-O-(1-carboxyvinyl)-3-phosphoshikimate + phosphate. The protein operates within metabolic intermediate biosynthesis; chorismate biosynthesis; chorismate from D-erythrose 4-phosphate and phosphoenolpyruvate: step 6/7. Functionally, catalyzes the transfer of the enolpyruvyl moiety of phosphoenolpyruvate (PEP) to the 5-hydroxyl of shikimate-3-phosphate (S3P) to produce enolpyruvyl shikimate-3-phosphate and inorganic phosphate. The sequence is that of 3-phosphoshikimate 1-carboxyvinyltransferase from Streptococcus agalactiae serotype III (strain NEM316).